A 399-amino-acid chain; its full sequence is Zinc finger TRAF-type-containing protein 1 (399 aa).

The span at 1-13 shows a compositional bias: gly residues; that stretch reads MSGAEEAGGGGPA. The disordered stretch occupies residues 1–21; it reads MSGAEEAGGGGPAAGPAGAVP. The RING-type; degenerate zinc finger occupies 106 to 151; sequence CTVCLDLPKASVYQCTNGHLMCAGCFIHLLADARLKEEQATCPNCR. The TRAF-type zinc finger occupies 152–210; sequence CEISKSLCCRNLAVEKAVSELPSECGFCLRQFPRSLLERHQKEECQDRVTQCKYKRIGC.

Belongs to the ZFTRAF1 family. As to quaternary structure, interacts with LGALS3. As to expression, expressed in heart, brain, liver, testis and kidney.

It is found in the cytoplasm. The protein localises to the perinuclear region. This Mus musculus (Mouse) protein is Zinc finger TRAF-type-containing protein 1.